Consider the following 188-residue polypeptide: UPF0157 protein VC_A0354 (188 aa).

The protein belongs to the UPF0157 (GrpB) family.

The polypeptide is UPF0157 protein VC_A0354 (Vibrio cholerae serotype O1 (strain ATCC 39315 / El Tor Inaba N16961)).